Here is a 205-residue protein sequence, read N- to C-terminus: Urease accessory protein UreG (205 aa).

GTP is bound at residue 12–19 (GPVGSGKT).

It belongs to the SIMIBI class G3E GTPase family. UreG subfamily. As to quaternary structure, homodimer. UreD, UreF and UreG form a complex that acts as a GTP-hydrolysis-dependent molecular chaperone, activating the urease apoprotein by helping to assemble the nickel containing metallocenter of UreC. The UreE protein probably delivers the nickel.

The protein localises to the cytoplasm. Its function is as follows. Facilitates the functional incorporation of the urease nickel metallocenter. This process requires GTP hydrolysis, probably effectuated by UreG. The polypeptide is Urease accessory protein UreG (Pseudomonas savastanoi pv. phaseolicola (strain 1448A / Race 6) (Pseudomonas syringae pv. phaseolicola (strain 1448A / Race 6))).